The chain runs to 101 residues: Small ribosomal subunit protein bS18c (101 aa).

The protein belongs to the bacterial ribosomal protein bS18 family. In terms of assembly, part of the 30S ribosomal subunit.

Its subcellular location is the plastid. The protein resides in the chloroplast. In Eucalyptus globulus subsp. globulus (Tasmanian blue gum), this protein is Small ribosomal subunit protein bS18c.